Here is a 413-residue protein sequence, read N- to C-terminus: Pyruvate dehydrogenase complex subunit homolog DDB_G0271564, mitochondrial (413 aa).

A mitochondrion-targeting transit peptide spans Met-1–Tyr-19. A Peripheral subunit-binding (PSBD) domain is found at Tyr-29 to Ile-67.

The protein belongs to the 2-oxoacid dehydrogenase family.

The protein localises to the mitochondrion. Its function is as follows. The pyruvate dehydrogenase complex catalyzes the overall conversion of pyruvate to acetyl-CoA and CO(2). It contains multiple copies of three enzymatic components: pyruvate dehydrogenase (E1), dihydrolipoamide acetyltransferase (E2) and lipoamide dehydrogenase (E3). This Dictyostelium discoideum (Social amoeba) protein is Pyruvate dehydrogenase complex subunit homolog DDB_G0271564, mitochondrial (pdhX).